Here is a 364-residue protein sequence, read N- to C-terminus: Poly(3-hydroxyalkanoate) polymerase subunit PhaE (364 aa).

A disordered region spans residues 322–364 (SGKTPTTALKAPAPATKATEKPATRATTRRKTAAKPTGGTADD). Low complexity predominate over residues 324-338 (KTPTTALKAPAPATK).

The protein belongs to the PHA/PHB synthase family. Type III PhaE subfamily. Forms a heterodimer with PhaC, which may multimerize in the presence of 3-hydroxybutyryl-CoA.

It is found in the cytoplasm. The protein operates within biopolymer metabolism; poly-(R)-3-hydroxybutanoate biosynthesis. Functionally, polymerizes D(-)-3-hydroxybutyryl-CoA to create polyhydroxybutyrate (PHB) which consists of thousands of hydroxybutyrate molecules linked end to end. This subunit has no catalytic activity but enhances the activity of PhaC, the catalytic subunit. In Thiocystis violacea, this protein is Poly(3-hydroxyalkanoate) polymerase subunit PhaE.